The sequence spans 360 residues: Peptide chain release factor 1 (360 aa).

Gln235 is modified (N5-methylglutamine). The segment at Arg286–Pro313 is disordered.

It belongs to the prokaryotic/mitochondrial release factor family. In terms of processing, methylated by PrmC. Methylation increases the termination efficiency of RF1.

It localises to the cytoplasm. In terms of biological role, peptide chain release factor 1 directs the termination of translation in response to the peptide chain termination codons UAG and UAA. This is Peptide chain release factor 1 from Cronobacter sakazakii (strain ATCC BAA-894) (Enterobacter sakazakii).